A 686-amino-acid polypeptide reads, in one-letter code: Disintegrin and metalloproteinase domain-containing protein 17 homolog (686 aa).

Residues 1-21 form the signal peptide; that stretch reads MKIQDRSLLIFLVLGILKSDA. Residues 22–177 constitute a propeptide that is removed on maturation; the sequence is FNTRVKRHAP…RRAIAIPSDR (156 aa). N-linked (GlcNAc...) asparagine glycosylation is found at Asn59, Asn206, and Asn262. At 178–637 the chain is on the extracellular side; it reads RKDVLNVKRN…TGGVLEFIKT (460 aa). The Peptidase M12B domain occupies 187 to 445; the sequence is NRCTLKLVAD…KWESCFQEEM (259 aa). 2 cysteine pairs are disulfide-bonded: Cys328-Cys440 and Cys394-Cys424. Position 370 (His370) interacts with Zn(2+). Glu371 is an active-site residue. The Zn(2+) site is built by His374 and His380. One can recognise a Disintegrin domain in the interval 446–535; that stretch reads TSFCGNGIVE…ECPSAPPVRD (90 aa). An N-linked (GlcNAc...) asparagine glycan is attached at Asn501. Cysteines 506 and 527 form a disulfide. A glycan (N-linked (GlcNAc...) asparagine) is linked at Asn581. The chain crosses the membrane as a helical span at residues 638-658; it reads HIVVIAIIFFTLIFVGIYKIV. Residues 659–686 lie on the Cytoplasmic side of the membrane; it reads KYGENFTEKVTHKTAGGCRSVFVKADVN.

It depends on Zn(2+) as a cofactor.

The protein localises to the cell membrane. In terms of biological role, metalloprotease. Acts together with protease sup-17 to facilitate lin-12/Notch signaling during developmental cell fate decision, including anchor cell/ventral uterine precursor cell decision. By modulating glp-1/Notch signaling, plays a role in germline development. This chain is Disintegrin and metalloproteinase domain-containing protein 17 homolog, found in Caenorhabditis elegans.